We begin with the raw amino-acid sequence, 367 residues long: Phosphoribosylaminoimidazole-succinocarboxamide synthase (367 aa).

The protein belongs to the SAICAR synthetase family.

The catalysed reaction is 5-amino-1-(5-phospho-D-ribosyl)imidazole-4-carboxylate + L-aspartate + ATP = (2S)-2-[5-amino-1-(5-phospho-beta-D-ribosyl)imidazole-4-carboxamido]succinate + ADP + phosphate + 2 H(+). It participates in purine metabolism; IMP biosynthesis via de novo pathway; 5-amino-1-(5-phospho-D-ribosyl)imidazole-4-carboxamide from 5-amino-1-(5-phospho-D-ribosyl)imidazole-4-carboxylate: step 1/2. This is Phosphoribosylaminoimidazole-succinocarboxamide synthase from Shewanella putrefaciens (strain CN-32 / ATCC BAA-453).